Here is a 137-residue protein sequence, read N- to C-terminus: Holo-[acyl-carrier-protein] synthase (137 aa).

Mg(2+) is bound by residues aspartate 8 and glutamate 57.

This sequence belongs to the P-Pant transferase superfamily. AcpS family. It depends on Mg(2+) as a cofactor.

It localises to the cytoplasm. The enzyme catalyses apo-[ACP] + CoA = holo-[ACP] + adenosine 3',5'-bisphosphate + H(+). Transfers the 4'-phosphopantetheine moiety from coenzyme A to a Ser of acyl-carrier-protein. The protein is Holo-[acyl-carrier-protein] synthase of Cereibacter sphaeroides (strain ATCC 17023 / DSM 158 / JCM 6121 / CCUG 31486 / LMG 2827 / NBRC 12203 / NCIMB 8253 / ATH 2.4.1.) (Rhodobacter sphaeroides).